The chain runs to 184 residues: H(2)/formate:CoB-CoM heterodisulfide,ferredoxin reductase subunit C2 (184 aa).

2 consecutive 4Fe-4S ferredoxin-type domains span residues glycine 24–threonine 54 and isoleucine 65–isoleucine 97. [4Fe-4S] cluster contacts are provided by cysteine 34, cysteine 37, cysteine 40, cysteine 44, cysteine 77, cysteine 80, cysteine 83, and cysteine 87.

It belongs to the HdrC family. In terms of assembly, the heterodisulfide reductase is composed of three subunits; HdrA, HdrB and HdrC. B1 and B2 subunits are interchangeable, as are the C1 and C2 subunits. The heterodisulfide reductase forms a supercomplex with formylmethanofuran dehydrogenase (Fwd), F(420)-non-reducing hydrogenase (Vhu) and formate dehydrogenase (Fdh). It depends on [4Fe-4S] cluster as a cofactor.

The enzyme catalyses coenzyme B + coenzyme M + 2 reduced [2Fe-2S]-[ferredoxin] + 2 H(+) = coenzyme M-coenzyme B heterodisulfide + 2 H2 + 2 oxidized [2Fe-2S]-[ferredoxin]. It carries out the reaction coenzyme B + coenzyme M + 2 reduced [2Fe-2S]-[ferredoxin] + 2 CO2 = coenzyme M-coenzyme B heterodisulfide + 2 formate + 2 oxidized [2Fe-2S]-[ferredoxin]. It participates in cofactor metabolism; coenzyme M-coenzyme B heterodisulfide reduction; coenzyme B and coenzyme M from coenzyme M-coenzyme B heterodisulfide: step 1/1. Its function is as follows. Part of a complex that catalyzes the reversible reduction of CoM-S-S-CoB to the thiol-coenzymes H-S-CoM (coenzyme M) and H-S-CoB (coenzyme B). This Methanococcus maripaludis (strain DSM 14266 / JCM 13030 / NBRC 101832 / S2 / LL) protein is H(2)/formate:CoB-CoM heterodisulfide,ferredoxin reductase subunit C2.